A 431-amino-acid chain; its full sequence is MAAFFLGESEMREHSSDLFMMTLNPFREQTTTTNAHDDHFYNLCFGSQQYRPRDEVGHIEQGNSSISTFSNGGVFRALAPIYLKAAQELLNEIVNVGNGSHGAKQERPVSKESTIYGVEDINGGYKPGVAALQMKKAKLISMGEMVEQRYKQYHDQMQTIISSFEQAAGLGSANSYTHMALQTISKQFRAVKDMISLQIKQINKLLGQKEFDEQLKKLGKMAHHHSNAWRPQRGLPEKAVSVLRSWLFEHFLHPYPRDLDKVMLAKQTGLTKSQVSNWFINARVRMWKPLVEELYSEEMDIEESRKGSDRYSTKGSSSKQPYNNTTSNESSNTILPAFRQGFTETETPRQNSSSSCSVVMRFTKQHMNQANFINFNGGFENYHTMDGNSVSLSLGLPHSCDQTFNNIHFESTSHGTENSAIYSSSTYQIMD.

The interval 80-96 (PIYLKAAQELLNEIVNV) is SR/KY domain. The segment at 128 to 199 (GVAALQMKKA…AVKDMISLQI (72 aa)) is BELL domain. The homeobox DNA-binding region spans 228-290 (AWRPQRGLPE…NARVRMWKPL (63 aa)). Residues 302–312 (EESRKGSDRYS) show a composition bias toward basic and acidic residues. The tract at residues 302–333 (EESRKGSDRYSTKGSSSKQPYNNTTSNESSNT) is disordered. A compositionally biased stretch (polar residues) spans 313-322 (TKGSSSKQPY). Residues 323–333 (NNTTSNESSNT) show a composition bias toward low complexity.

It belongs to the TALE/BELL homeobox family. As to quaternary structure, may form heterodimeric complexes with TALE/KNOX proteins. Interacts with OFP1.

The protein resides in the nucleus. The polypeptide is BEL1-like homeodomain protein 5 (BLH5) (Arabidopsis thaliana (Mouse-ear cress)).